Here is a 468-residue protein sequence, read N- to C-terminus: Acyltransferase R4 (468 aa).

A run of 7 helical transmembrane segments spans residues 21–41 (GILS…LGYD), 70–90 (LFTI…CLFF), 133–153 (LNLL…TGFF), 252–272 (FLAA…PLFW), 308–328 (DPFG…YPTW), 388–408 (FAVY…LFSW), and 423–443 (IGFG…AAMF).

Belongs to the acyltransferase 3 family.

The protein localises to the membrane. The protein operates within secondary metabolite biosynthesis. Acyltransferase; part of the gene cluster that mediates the biosynthesis of squalestatin S1 (SQS1, also known as zaragozic acid A), a heavily oxidized fungal polyketide that offers potent cholesterol lowering activity by targeting squalene synthase (SS). SQS1 is composed of a 2,8-dioxobicyclic[3.2.1]octane-3,4,5-tricarboxyclic acid core that is connected to two lipophilic polyketide arms. These initial steps feature the priming of an unusual benzoic acid starter unit onto the highly reducing polyketide synthase pks2, followed by oxaloacetate extension and product release to generate a tricarboxylic acid containing product. The phenylalanine ammonia lyase (PAL) M7 and the acyl-CoA ligase M9 are involved in transforming phenylalanine into benzoyl-CoA. The citrate synthase-like protein R3 is involved in connecting the C-alpha-carbons of the hexaketide chain and oxaloacetate to afford the tricarboxylic acid unit. The potential hydrolytic enzymes, M8 and M10, are in close proximity to pks2 and may participate in product release. On the other side, the tetraketide arm is synthesized by a the squalestatin tetraketide synthase pks1 and enzymatically esterified to the core in the last biosynthetic step, by the acetyltransferase M4. The biosynthesis of the tetraketide must involve 3 rounds of chain extension. After the first and second rounds methyl-transfer occurs, and in all rounds of extension the ketoreductase and dehydratase are active. The enoyl reductase and C-MeT of pks1 are not active in the final round of extension. The acetyltransferase M4 appears to have a broad substrate selectivity for its acyl CoA substrate, allowing the in vitro synthesis of novel squalestatins. The biosynthesis of SQS1 requires several oxidative steps likely performed by oxidoreductases M1, R1 and R2. Finally, in support of the identification of the cluster as being responsible for SQS1 production, the cluster contains a gene encoding a putative squalene synthase (SS) R6, suggesting a likely mechanism for self-resistance. In Phoma sp. (strain ATCC 20986 / MF5453), this protein is Acyltransferase R4.